A 75-amino-acid polypeptide reads, in one-letter code: MRRRIYEERGAVRQAGLAHVFEYQGGAAHTGAVQDSDWAVVMRGDIAITLVYAQPVSMPPVLPLPDFAFQACCSY.

This is an uncharacterized protein from Treponema pallidum (strain Nichols).